The chain runs to 449 residues: N-succinylarginine dihydrolase (449 aa).

Substrate-binding positions include 19 to 28 (GGLSYGNVAS), N110, and 137 to 138 (HR). The tract at residues 23-43 (YGNVASQSNSQQGSNPREAAR) is disordered. A compositionally biased stretch (polar residues) spans 25–37 (NVASQSNSQQGSN). Residue E174 is part of the active site. Residue R214 participates in substrate binding. H250 is a catalytic residue. Positions 252 and 365 each coordinate substrate. C371 (nucleophile) is an active-site residue.

Belongs to the succinylarginine dihydrolase family. As to quaternary structure, homodimer.

The enzyme catalyses N(2)-succinyl-L-arginine + 2 H2O + 2 H(+) = N(2)-succinyl-L-ornithine + 2 NH4(+) + CO2. It functions in the pathway amino-acid degradation; L-arginine degradation via AST pathway; L-glutamate and succinate from L-arginine: step 2/5. In terms of biological role, catalyzes the hydrolysis of N(2)-succinylarginine into N(2)-succinylornithine, ammonia and CO(2). This Pseudomonas entomophila (strain L48) protein is N-succinylarginine dihydrolase.